The following is a 204-amino-acid chain: Nucleoside triphosphate pyrophosphatase (204 aa).

Asp-78 serves as the catalytic Proton acceptor.

This sequence belongs to the Maf family. The cofactor is a divalent metal cation.

The protein resides in the cytoplasm. It catalyses the reaction a ribonucleoside 5'-triphosphate + H2O = a ribonucleoside 5'-phosphate + diphosphate + H(+). The catalysed reaction is a 2'-deoxyribonucleoside 5'-triphosphate + H2O = a 2'-deoxyribonucleoside 5'-phosphate + diphosphate + H(+). Nucleoside triphosphate pyrophosphatase. May have a dual role in cell division arrest and in preventing the incorporation of modified nucleotides into cellular nucleic acids. This chain is Nucleoside triphosphate pyrophosphatase, found in Prochlorococcus marinus (strain MIT 9215).